Reading from the N-terminus, the 474-residue chain is Glutamate--tRNA ligase (474 aa).

Positions 18 to 28 match the 'HIGH' region motif; it reads PSPTGFLHIGG. Residues 244-248 carry the 'KMSKS' region motif; it reads KLSKR. Lys247 serves as a coordination point for ATP.

This sequence belongs to the class-I aminoacyl-tRNA synthetase family. Glutamate--tRNA ligase type 1 subfamily. In terms of assembly, monomer.

The protein resides in the cytoplasm. The enzyme catalyses tRNA(Glu) + L-glutamate + ATP = L-glutamyl-tRNA(Glu) + AMP + diphosphate. Functionally, catalyzes the attachment of glutamate to tRNA(Glu) in a two-step reaction: glutamate is first activated by ATP to form Glu-AMP and then transferred to the acceptor end of tRNA(Glu). This is Glutamate--tRNA ligase from Caulobacter sp. (strain K31).